The chain runs to 101 residues: Small ribosomal subunit protein uS14 (101 aa).

A disordered region spans residues 50-70 (SLPRDSSPSRQRKRCRQTGRP). Residues 59–68 (RQRKRCRQTG) are compositionally biased toward basic residues.

The protein belongs to the universal ribosomal protein uS14 family. Part of the 30S ribosomal subunit. Contacts proteins S3 and S10.

Binds 16S rRNA, required for the assembly of 30S particles and may also be responsible for determining the conformation of the 16S rRNA at the A site. The chain is Small ribosomal subunit protein uS14 from Erwinia tasmaniensis (strain DSM 17950 / CFBP 7177 / CIP 109463 / NCPPB 4357 / Et1/99).